We begin with the raw amino-acid sequence, 93 residues long: FMRFamide-like neuropeptides 22 (93 aa).

Positions M1–A19 are cleaved as a signal peptide. Positions Q20–R46 are excised as a propeptide. Phenylalanine amide occurs at positions 55, 67, and 79. The propeptide occupies S83 to Y93.

Belongs to the FARP (FMRFamide related peptide) family.

Its subcellular location is the secreted. FMRFamides and FMRFamide-like peptides are neuropeptides. In terms of biological role, SPSAKWMRF-amide: Acts as a ligand for the npr-22 receptor in vitro. This chain is FMRFamide-like neuropeptides 22, found in Caenorhabditis elegans.